We begin with the raw amino-acid sequence, 185 residues long: MISVNDFRTGLTIEVDGNIFTVLEFQHVKPGKGAAFVRSKLRNLRSGNTTEMTFRGGEKVNPARIESSTMQYLYASGDEYTFMNTETYEQMTFTRNQIERELRFLKENMNVQIMQYNGETIGIQLPNTVELVVTECEPGVKGDTASNVTKKATLETGFVVNVPLFVEEGERLIIDTRTEAYVSRA.

The protein belongs to the elongation factor P family.

Its subcellular location is the cytoplasm. The protein operates within protein biosynthesis; polypeptide chain elongation. Functionally, involved in peptide bond synthesis. Stimulates efficient translation and peptide-bond synthesis on native or reconstituted 70S ribosomes in vitro. Probably functions indirectly by altering the affinity of the ribosome for aminoacyl-tRNA, thus increasing their reactivity as acceptors for peptidyl transferase. This is Elongation factor P from Brevibacillus brevis (strain 47 / JCM 6285 / NBRC 100599).